The chain runs to 438 residues: Tol-Pal system protein TolB (438 aa).

A signal peptide spans 1-21 (MVKRSLLVLALLICLPATLFA).

The protein belongs to the TolB family. As to quaternary structure, the Tol-Pal system is composed of five core proteins: the inner membrane proteins TolA, TolQ and TolR, the periplasmic protein TolB and the outer membrane protein Pal. They form a network linking the inner and outer membranes and the peptidoglycan layer.

Its subcellular location is the periplasm. Part of the Tol-Pal system, which plays a role in outer membrane invagination during cell division and is important for maintaining outer membrane integrity. In Desulfosudis oleivorans (strain DSM 6200 / JCM 39069 / Hxd3) (Desulfococcus oleovorans), this protein is Tol-Pal system protein TolB.